A 297-amino-acid polypeptide reads, in one-letter code: Formamidopyrimidine-DNA glycosylase (297 aa).

Pro-2 functions as the Schiff-base intermediate with DNA in the catalytic mechanism. Catalysis depends on Glu-3, which acts as the Proton donor. The active-site Proton donor; for beta-elimination activity is Lys-58. His-104, Arg-127, and Lys-170 together coordinate DNA. The segment at 261 to 297 (NVYDREGEACRTPGCTGTVERMTQAGRSTFHCPQCQR) adopts an FPG-type zinc-finger fold. Residue Arg-287 is the Proton donor; for delta-elimination activity of the active site.

This sequence belongs to the FPG family. In terms of assembly, monomer. Requires Zn(2+) as cofactor.

It carries out the reaction Hydrolysis of DNA containing ring-opened 7-methylguanine residues, releasing 2,6-diamino-4-hydroxy-5-(N-methyl)formamidopyrimidine.. The catalysed reaction is 2'-deoxyribonucleotide-(2'-deoxyribose 5'-phosphate)-2'-deoxyribonucleotide-DNA = a 3'-end 2'-deoxyribonucleotide-(2,3-dehydro-2,3-deoxyribose 5'-phosphate)-DNA + a 5'-end 5'-phospho-2'-deoxyribonucleoside-DNA + H(+). In terms of biological role, involved in base excision repair of DNA damaged by oxidation or by mutagenic agents. Acts as a DNA glycosylase that recognizes and removes damaged bases. Has a preference for oxidized purines, such as 7,8-dihydro-8-oxoguanine (8-oxoG). Has AP (apurinic/apyrimidinic) lyase activity and introduces nicks in the DNA strand. Cleaves the DNA backbone by beta-delta elimination to generate a single-strand break at the site of the removed base with both 3'- and 5'-phosphates. The sequence is that of Formamidopyrimidine-DNA glycosylase from Allorhizobium ampelinum (strain ATCC BAA-846 / DSM 112012 / S4) (Agrobacterium vitis (strain S4)).